We begin with the raw amino-acid sequence, 427 residues long: Peptidase B (427 aa).

Lys195 and Asp200 together coordinate Mn(2+). Lys207 is a catalytic residue. 3 residues coordinate Mn(2+): Asp218, Asp277, and Glu279. The active site involves Arg281.

It belongs to the peptidase M17 family. In terms of assembly, homohexamer. Requires Mn(2+) as cofactor.

The protein resides in the cytoplasm. The enzyme catalyses Release of an N-terminal amino acid, Xaa, from a peptide or arylamide. Xaa is preferably Glu or Asp but may be other amino acids, including Leu, Met, His, Cys and Gln.. Its function is as follows. Probably plays an important role in intracellular peptide degradation. This is Peptidase B from Salmonella typhi.